We begin with the raw amino-acid sequence, 183 residues long: Dual-action ribosomal maturation protein DarP (183 aa).

The segment at 1–20 is disordered; sequence MKQKYEDWLNDVPDNQEDDE.

This sequence belongs to the DarP family.

It is found in the cytoplasm. Its function is as follows. Member of a network of 50S ribosomal subunit biogenesis factors which assembles along the 30S-50S interface, preventing incorrect 23S rRNA structures from forming. Promotes peptidyl transferase center (PTC) maturation. The sequence is that of Dual-action ribosomal maturation protein DarP from Pectobacterium carotovorum subsp. carotovorum (strain PC1).